The chain runs to 378 residues: Histidine decarboxylase (378 aa).

His-120 is a substrate binding site. Lys-233 carries the N6-(pyridoxal phosphate)lysine modification. Ser-323 is a catalytic residue.

It belongs to the group II decarboxylase family. In terms of assembly, homotetramer. Pyridoxal 5'-phosphate serves as cofactor.

The enzyme catalyses L-histidine + H(+) = histamine + CO2. This is Histidine decarboxylase (hdc) from Morganella morganii (Proteus morganii).